Reading from the N-terminus, the 236-residue chain is Putative (5-formylfuran-3-yl)methyl phosphate synthase (236 aa).

K38 acts as the Schiff-base intermediate with substrate in catalysis. The active-site Proton acceptor is K94.

Belongs to the MfnB family.

It catalyses the reaction 2 D-glyceraldehyde 3-phosphate = 4-(hydroxymethyl)-2-furancarboxaldehyde phosphate + phosphate + 2 H2O. In terms of biological role, catalyzes the formation of 4-(hydroxymethyl)-2-furancarboxaldehyde phosphate (4-HFC-P) from two molecules of glyceraldehyde-3-P (GA-3-P). The chain is Putative (5-formylfuran-3-yl)methyl phosphate synthase from Methylorubrum extorquens (Methylobacterium dichloromethanicum).